We begin with the raw amino-acid sequence, 450 residues long: Tubulin alpha-5 chain (450 aa).

GTP is bound by residues Q11, E71, G144, T145, T179, N206, and N228. Position 71 (E71) interacts with Mg(2+). The active site involves E254.

This sequence belongs to the tubulin family. As to quaternary structure, dimer of alpha and beta chains. A typical microtubule is a hollow water-filled tube with an outer diameter of 25 nm and an inner diameter of 15 nM. Alpha-beta heterodimers associate head-to-tail to form protofilaments running lengthwise along the microtubule wall with the beta-tubulin subunit facing the microtubule plus end conferring a structural polarity. Microtubules usually have 13 protofilaments but different protofilament numbers can be found in some organisms and specialized cells. The cofactor is Mg(2+). Undergoes a tyrosination/detyrosination cycle, the cyclic removal and re-addition of a C-terminal tyrosine residue by the enzymes tubulin tyrosine carboxypeptidase (TTCP) and tubulin tyrosine ligase (TTL), respectively.

It is found in the cytoplasm. The protein localises to the cytoskeleton. It catalyses the reaction GTP + H2O = GDP + phosphate + H(+). Tubulin is the major constituent of microtubules, a cylinder consisting of laterally associated linear protofilaments composed of alpha- and beta-tubulin heterodimers. Microtubules grow by the addition of GTP-tubulin dimers to the microtubule end, where a stabilizing cap forms. Below the cap, tubulin dimers are in GDP-bound state, owing to GTPase activity of alpha-tubulin. In Zea mays (Maize), this protein is Tubulin alpha-5 chain (TUBA5).